We begin with the raw amino-acid sequence, 475 residues long: L-ornithine N(5)-monooxygenase (475 aa).

FAD-binding positions include 65-73 (ERQPEFGWH) and Gln-84. Lys-89 contributes to the substrate binding site. Val-150 is a binding site for FAD. 238-241 (GGQS) lines the NADP(+) pocket. Substrate contacts are provided by residues 277–280 (NEIF) and Asn-307. An NADP(+)-binding site is contributed by 307–309 (NYG). 446–448 (SLL) contacts FAD. Residue Ser-449 participates in substrate binding.

Belongs to the lysine N(6)-hydroxylase/L-ornithine N(5)-oxygenase family. As to quaternary structure, homotetramer. It depends on FAD as a cofactor.

The enzyme catalyses L-ornithine + NADPH + O2 = N(5)-hydroxy-L-ornithine + NADP(+) + H2O. It catalyses the reaction L-ornithine + NADH + O2 = N(5)-hydroxy-L-ornithine + NAD(+) + H2O. It participates in siderophore biosynthesis. Functionally, L-ornithine N(5)-monooxygenase; part of the gene cluster that mediates the biosynthesis of hydroxamate-containing siderophores that play a critical role in virulence via intracellular iron acquisition during macrophage infection. SID1 catalyzes the conversion of L-ornithine to N(5)-hydroxyornithine, the first step in the biosynthesis of all hydroxamate-containing siderophores. In Ajellomyces capsulatus (Darling's disease fungus), this protein is L-ornithine N(5)-monooxygenase.